We begin with the raw amino-acid sequence, 1167 residues long: Nucleolar protein 8 (1167 aa).

In terms of domain architecture, RRM spans 8-89 (KRLYVGGLSQ…GTLQIQLAKE (82 aa)). The interval 223–304 (VQKDESSTGS…NSISDDDTDS (82 aa)) is disordered. Residue K225 forms a Glycyl lysine isopeptide (Lys-Gly) (interchain with G-Cter in SUMO2) linkage. Over residues 248 to 275 (LTQQQAAQKRTCDSITPSKSSPVPVSDT) the composition is skewed to polar residues. S268 and S298 each carry phosphoserine. Phosphothreonine is present on T302. S304 bears the Phosphoserine mark. Residue K314 forms a Glycyl lysine isopeptide (Lys-Gly) (interchain with G-Cter in SUMO2) linkage. A phosphoserine mark is found at S331 and S365. Y376 is modified (phosphotyrosine). S378 is modified (phosphoserine). The residue at position 381 (T381) is a Phosphothreonine. The residue at position 432 (S432) is a Phosphoserine. Disordered regions lie at residues 435-470 (ESAL…DSEG), 499-533 (LKVP…TGLR), 590-908 (KDSV…EEEL), 932-982 (NRGS…AEKL), and 1006-1026 (YTSE…EKPE). Residues 457-470 (EDADSASELADSEG) show a composition bias toward acidic residues. Residues 501–510 (VPNEDTKSDG) are compositionally biased toward basic and acidic residues. Polar residues predominate over residues 640-652 (NYIQPQKRQTTFE). The span at 653–668 (SQDRKAVSPSSSEKRS) shows a compositional bias: basic and acidic residues. S723 is modified (phosphoserine). The segment covering 727–736 (SSKDTREIKT) has biased composition (basic and acidic residues). A compositionally biased stretch (polar residues) spans 738-748 (FSLSISNSSDV). Positions 749-776 (SAKDKHAEDNEKRLAALEARQKAKEVQK) are enriched in basic and acidic residues. The stretch at 753 to 779 (KHAEDNEKRLAALEARQKAKEVQKKLV) forms a coiled coil. Residue T795 is modified to Phosphothreonine. S801 carries the post-translational modification Phosphoserine. A compositionally biased stretch (basic and acidic residues) spans 817–827 (HPGEEWVKESM). A phosphoserine mark is found at S837, S838, S843, and S845. Over residues 837-847 (SSDDDESDSED) the composition is skewed to acidic residues. Basic and acidic residues predominate over residues 874–887 (GTDDRFRMDSRFLE). The stretch at 886–924 (LETDSEEEQEEVNEKKTAEEEELAEEKKKALNVVQSVLQ) forms a coiled coil. T888 carries the phosphothreonine modification. Residue S890 is modified to Phosphoserine. Basic and acidic residues-rich tracts occupy residues 940–968 (KFKD…PKES) and 1007–1026 (TSEK…EKPE). Position 1036 is a phosphoserine (S1036). K1057 is covalently cross-linked (Glycyl lysine isopeptide (Lys-Gly) (interchain with G-Cter in SUMO2)). Disordered stretches follow at residues 1071–1105 (IVWQ…EASL) and 1145–1167 (RTTN…MKPK). Residues S1082, S1083, S1084, and S1099 each carry the phosphoserine modification. Residues 1153–1167 (CRKKHKDAKRKMKPK) show a composition bias toward basic residues.

Interacts with the GTP form of RRAGA, RRAGC and RRAGD. Interacts with NIP7. Interacts with DDX18; the interaction is RNA-dependent. Interacts with DDX47; the interaction is RNA-dependent. In terms of processing, phosphorylated. As to expression, expressed in various diffuse-type gastric cancers. Detected at lower levels in skeletal muscle.

It localises to the nucleus. The protein localises to the nucleolus. Its function is as follows. Plays an essential role in the survival of diffuse-type gastric cancer cells. Acts as a nucleolar anchoring protein for DDX47. May be involved in regulation of gene expression at the post-transcriptional level or in ribosome biogenesis in cancer cells. This is Nucleolar protein 8 from Homo sapiens (Human).